A 306-amino-acid chain; its full sequence is HORMA domain-containing protein 2 (306 aa).

The HORMA domain occupies 29–232 (HESLIMVKKL…TGFHSMKVKV (204 aa)).

Interacts with HORMAD1. Post-translationally, phosphorylated in a SPO11-dependent manner.

The protein localises to the nucleus. The protein resides in the chromosome. Essential for synapsis surveillance during meiotic prophase via the recruitment of ATR activity. Plays a key role in the male mid-pachytene checkpoint and the female meiotic prophase checkpoint: required for efficient build-up of ATR activity on unsynapsed chromosome regions, a process believed to form the basis of meiotic silencing of unsynapsed chromatin (MSUC) and meiotic prophase quality control in both sexes. Required for the DNA double-strand break-independent, BRCA1-dependent activation of ATR on the sex chromosomes that is essential for normal sex body formation. The chain is HORMA domain-containing protein 2 (HORMAD2) from Bos taurus (Bovine).